We begin with the raw amino-acid sequence, 377 residues long: Nitric oxide reductase FlRd-NAD(+) reductase (377 aa).

This sequence belongs to the FAD-dependent oxidoreductase family. The cofactor is FAD.

It localises to the cytoplasm. The catalysed reaction is 2 reduced [nitric oxide reductase rubredoxin domain] + NAD(+) + H(+) = 2 oxidized [nitric oxide reductase rubredoxin domain] + NADH. It functions in the pathway nitrogen metabolism; nitric oxide reduction. Functionally, one of at least two accessory proteins for anaerobic nitric oxide (NO) reductase. Reduces the rubredoxin moiety of NO reductase. The sequence is that of Nitric oxide reductase FlRd-NAD(+) reductase from Shigella sonnei (strain Ss046).